We begin with the raw amino-acid sequence, 292 residues long: 2-(5''-triphosphoribosyl)-3'-dephosphocoenzyme-A synthase (292 aa).

This sequence belongs to the CitG/MdcB family.

The enzyme catalyses 3'-dephospho-CoA + ATP = 2'-(5''-triphospho-alpha-D-ribosyl)-3'-dephospho-CoA + adenine. In terms of biological role, catalyzes the formation of 2-(5''-triphosphoribosyl)-3'-dephosphocoenzyme-A, the precursor of the prosthetic group of the holo-acyl carrier protein (gamma chain) of citrate lyase, from ATP and dephospho-CoA. This Escherichia coli (strain ATCC 8739 / DSM 1576 / NBRC 3972 / NCIMB 8545 / WDCM 00012 / Crooks) protein is 2-(5''-triphosphoribosyl)-3'-dephosphocoenzyme-A synthase.